The chain runs to 248 residues: Type III pantothenate kinase (248 aa).

Residue 8-15 (DAGNTRTK) participates in ATP binding. Substrate-binding positions include Y87 and 94–97 (GVDR). D96 functions as the Proton acceptor in the catalytic mechanism. T119 contributes to the ATP binding site. Substrate is bound at residue T173.

This sequence belongs to the type III pantothenate kinase family. In terms of assembly, homodimer. NH4(+) is required as a cofactor. K(+) serves as cofactor.

It localises to the cytoplasm. The catalysed reaction is (R)-pantothenate + ATP = (R)-4'-phosphopantothenate + ADP + H(+). The protein operates within cofactor biosynthesis; coenzyme A biosynthesis; CoA from (R)-pantothenate: step 1/5. Its function is as follows. Catalyzes the phosphorylation of pantothenate (Pan), the first step in CoA biosynthesis. The sequence is that of Type III pantothenate kinase from Methylobacillus flagellatus (strain ATCC 51484 / DSM 6875 / VKM B-1610 / KT).